We begin with the raw amino-acid sequence, 371 residues long: Peptide chain release factor 2 (371 aa).

Gln251 carries the post-translational modification N5-methylglutamine.

Belongs to the prokaryotic/mitochondrial release factor family. Methylated by PrmC. Methylation increases the termination efficiency of RF2.

The protein localises to the cytoplasm. Peptide chain release factor 2 directs the termination of translation in response to the peptide chain termination codons UGA and UAA. The chain is Peptide chain release factor 2 from Arthrobacter sp. (strain FB24).